Consider the following 124-residue polypeptide: Translation initiation factor 5A (124 aa).

A Hypusine modification is found at K36.

It belongs to the eIF-5A family.

The protein localises to the cytoplasm. Functionally, functions by promoting the formation of the first peptide bond. This is Translation initiation factor 5A from Haloquadratum walsbyi (strain DSM 16790 / HBSQ001).